The following is a 771-amino-acid chain: Probable exo-1,4-beta-xylosidase bxlB (771 aa).

Residues 1 to 25 (MAHITSWHYGNAIALLVSLAPGALS) form the signal peptide. N-linked (GlcNAc...) asparagine glycosylation is present at Asn-67. Asp-293 is a catalytic residue. Asn-305, Asn-345, Asn-423, and Asn-464 each carry an N-linked (GlcNAc...) asparagine glycan.

The protein belongs to the glycosyl hydrolase 3 family.

The protein resides in the secreted. The catalysed reaction is Hydrolysis of (1-&gt;4)-beta-D-xylans, to remove successive D-xylose residues from the non-reducing termini.. Its pathway is glycan degradation; xylan degradation. In terms of biological role, xylan 1,4-beta-xylosidase involved in the hydrolysis of xylan, a major structural heterogeneous polysaccharide found in plant biomass representing the second most abundant polysaccharide in the biosphere, after cellulose. The sequence is that of Probable exo-1,4-beta-xylosidase bxlB (bxlB) from Aspergillus fumigatus (strain CBS 144.89 / FGSC A1163 / CEA10) (Neosartorya fumigata).